The sequence spans 181 residues: ATP synthase subunit b (181 aa).

The helical transmembrane segment at 12-32 (LPAVYDIVWSAVVFVVLLVVI) threads the bilayer.

The protein belongs to the ATPase B chain family. F-type ATPases have 2 components, F(1) - the catalytic core - and F(0) - the membrane proton channel. F(1) has five subunits: alpha(3), beta(3), gamma(1), delta(1), epsilon(1). F(0) has three main subunits: a(1), b(2) and c(10-14). The alpha and beta chains form an alternating ring which encloses part of the gamma chain. F(1) is attached to F(0) by a central stalk formed by the gamma and epsilon chains, while a peripheral stalk is formed by the delta and b chains.

The protein localises to the cell membrane. Functionally, f(1)F(0) ATP synthase produces ATP from ADP in the presence of a proton or sodium gradient. F-type ATPases consist of two structural domains, F(1) containing the extramembraneous catalytic core and F(0) containing the membrane proton channel, linked together by a central stalk and a peripheral stalk. During catalysis, ATP synthesis in the catalytic domain of F(1) is coupled via a rotary mechanism of the central stalk subunits to proton translocation. In terms of biological role, component of the F(0) channel, it forms part of the peripheral stalk, linking F(1) to F(0). In Clavibacter sepedonicus (Clavibacter michiganensis subsp. sepedonicus), this protein is ATP synthase subunit b.